The following is a 178-amino-acid chain: Crossover junction endodeoxyribonuclease RuvC (178 aa).

Catalysis depends on residues Asp-18, Glu-78, and Asp-150. Mg(2+)-binding residues include Asp-18, Glu-78, and Asp-150.

Belongs to the RuvC family. As to quaternary structure, homodimer which binds Holliday junction (HJ) DNA. The HJ becomes 2-fold symmetrical on binding to RuvC with unstacked arms; it has a different conformation from HJ DNA in complex with RuvA. In the full resolvosome a probable DNA-RuvA(4)-RuvB(12)-RuvC(2) complex forms which resolves the HJ. Mg(2+) serves as cofactor.

Its subcellular location is the cytoplasm. The catalysed reaction is Endonucleolytic cleavage at a junction such as a reciprocal single-stranded crossover between two homologous DNA duplexes (Holliday junction).. Its function is as follows. The RuvA-RuvB-RuvC complex processes Holliday junction (HJ) DNA during genetic recombination and DNA repair. Endonuclease that resolves HJ intermediates. Cleaves cruciform DNA by making single-stranded nicks across the HJ at symmetrical positions within the homologous arms, yielding a 5'-phosphate and a 3'-hydroxyl group; requires a central core of homology in the junction. The consensus cleavage sequence is 5'-(A/T)TT(C/G)-3'. Cleavage occurs on the 3'-side of the TT dinucleotide at the point of strand exchange. HJ branch migration catalyzed by RuvA-RuvB allows RuvC to scan DNA until it finds its consensus sequence, where it cleaves and resolves the cruciform DNA. This chain is Crossover junction endodeoxyribonuclease RuvC, found in Granulibacter bethesdensis (strain ATCC BAA-1260 / CGDNIH1).